Here is a 316-residue protein sequence, read N- to C-terminus: L-lactate dehydrogenase (316 aa).

NAD(+)-binding positions include V15, D37, K42, Y68, and G82–L83. Substrate contacts are provided by residues Q85, R91, and N123 to D126. NAD(+) contacts are provided by residues A121–N123 and T146. Substrate is bound at residue D151–R154. Positions 156 and 171 each coordinate beta-D-fructose 1,6-bisphosphate. H178 functions as the Proton acceptor in the catalytic mechanism. Phosphotyrosine is present on Y222. Residue T231 participates in substrate binding.

This sequence belongs to the LDH/MDH superfamily. LDH family. In terms of assembly, homotetramer.

The protein resides in the cytoplasm. The enzyme catalyses (S)-lactate + NAD(+) = pyruvate + NADH + H(+). It functions in the pathway fermentation; pyruvate fermentation to lactate; (S)-lactate from pyruvate: step 1/1. Its activity is regulated as follows. Allosterically activated by fructose 1,6-bisphosphate (FBP). Functionally, catalyzes the conversion of lactate to pyruvate. In Borrelia hermsii (strain HS1 / DAH), this protein is L-lactate dehydrogenase.